A 79-amino-acid chain; its full sequence is Ribonuclease P protein component 1 (79 aa).

The protein belongs to the eukaryotic/archaeal RNase P protein component 1 family. As to quaternary structure, consists of a catalytic RNA component and at least 4-5 protein subunits.

Its subcellular location is the cytoplasm. The catalysed reaction is Endonucleolytic cleavage of RNA, removing 5'-extranucleotides from tRNA precursor.. In terms of biological role, part of ribonuclease P, a protein complex that generates mature tRNA molecules by cleaving their 5'-ends. In Saccharolobus solfataricus (strain ATCC 35092 / DSM 1617 / JCM 11322 / P2) (Sulfolobus solfataricus), this protein is Ribonuclease P protein component 1.